Here is a 271-residue protein sequence, read N- to C-terminus: Pyrroline-5-carboxylate reductase (271 aa).

The protein belongs to the pyrroline-5-carboxylate reductase family.

It is found in the cytoplasm. It carries out the reaction L-proline + NADP(+) = (S)-1-pyrroline-5-carboxylate + NADPH + 2 H(+). It catalyses the reaction L-proline + NAD(+) = (S)-1-pyrroline-5-carboxylate + NADH + 2 H(+). It functions in the pathway amino-acid biosynthesis; L-proline biosynthesis; L-proline from L-glutamate 5-semialdehyde: step 1/1. Catalyzes the reduction of 1-pyrroline-5-carboxylate (PCA) to L-proline. In Staphylococcus aureus (strain COL), this protein is Pyrroline-5-carboxylate reductase.